We begin with the raw amino-acid sequence, 522 residues long: Kelch domain-containing protein 4 (522 aa).

The segment covering 1–10 (MGKKGKKEKK) has biased composition (basic residues). The segment at 1-33 (MGKKGKKEKKGRGAEKTAAKMEKKVSKRSRKEE) is disordered. Residues 11-24 (GRGAEKTAAKMEKK) are compositionally biased toward basic and acidic residues. Kelch repeat units lie at residues 77–129 (ELIL…VVPQ), 133–187 (QLWV…AWKR), 188–241 (QLIL…VTPQ), 243–289 (GIII…MNPS), and 308–361 (QTLF…RRGR). Disordered stretches follow at residues 346-378 (QLKG…GAGT), 402-432 (LAAP…PCPR), and 481-522 (DPET…GAED). Phosphoserine occurs at positions 413 and 418. A Kelch 6 repeat occupies 443-494 (VLYVYGGMFEAGDRQVTLSDLHCLDLHRMEAWKALVEMDPETQEWLEETDSE).

The chain is Kelch domain-containing protein 4 (KLHDC4) from Pongo abelii (Sumatran orangutan).